Here is a 228-residue protein sequence, read N- to C-terminus: Ribonuclease 3 (228 aa).

The RNase III domain occupies 5 to 127; sequence LTALQERLKH…LIGAVYLDAG (123 aa). Position 40 (Glu-40) interacts with Mg(2+). Asp-44 is an active-site residue. Mg(2+) contacts are provided by Asp-113 and Glu-116. Residue Glu-116 is part of the active site. A DRBM domain is found at 154 to 224; sequence DPKTELQEWL…AAAMLIRLKA (71 aa).

The protein belongs to the ribonuclease III family. As to quaternary structure, homodimer. It depends on Mg(2+) as a cofactor.

The protein resides in the cytoplasm. The enzyme catalyses Endonucleolytic cleavage to 5'-phosphomonoester.. Functionally, digests double-stranded RNA. Involved in the processing of primary rRNA transcript to yield the immediate precursors to the large and small rRNAs (23S and 16S). Processes some mRNAs, and tRNAs when they are encoded in the rRNA operon. Processes pre-crRNA and tracrRNA of type II CRISPR loci if present in the organism. The protein is Ribonuclease 3 of Variovorax paradoxus (strain S110).